The primary structure comprises 1131 residues: MSSLSRELVFLILQFLDEEKFKETVHKLEQESGFFFNMKYFEDEVHNGNWDEVEKYLSGFTKVDDNRYSMKIFFEIRKQKYLEALDKHDRPKAVDILVKDLKVFSTFNEELFKEITQLLTLENFRENEQLSKYGDTKSARAIMLVELKKLIEANPLFRDKLQFPTLRNSRLRTLINQSLNWQHQLCKNPRPNPDIKTLFVDHSCGPPNGARAPSPVNNPLLGGIPKAGGFPPLGAHGPFQPTASPVPTPLAGWMSSPSSVPHPAVSAGAIALGGPSIPAALKHPRTPPTNASLDYPSADSEHVSKRTRPMGISDEVNLGVNMLPMSFSGQAHGHSPAFKAPDDLPKTVARTLSQGSSPMSMDFHPIKQTLLLVGTNVGDIGLWEVGSRERLVQKTFKVWDLSKCSMPLQAALVKEPVVSVNRVIWSPDGSLFGVAYSRHIVQLYSYHGGEDMRQHLEIDAHVGGVNDISFSTPNKQLCVITCGDDKTIKVWDAATGVKRHTFEGHEAPVYSVCPHYKENIQFIFSTALDGKIKAWLYDNMGSRVDYDAPGRWCTTMAYSADGTRLFSCGTSKDGESFIVEWNESEGAVKRTYQGFHKRSLGVVQFDTTKNRYLAAGDDFSIKFWDMDAVQLLTAIDGDGGLQASPRIRFNKEGSLLAVSGNENVIKIMANSDGLRLLHTFENISSESSKPAINSIAAAAAAAATSAGHADRSANVVSIQGMNGDSRNMVDVKPVITEESNDKSKIWKLTEVSEPSQCRSLRLPENLRVAKISRLIFTNSGNAILALASNAIHLLWKWQRNERNATGKATASLPPQQWQPASGILMTNDVAETNPEEAVPCFALSKNDSYVMSASGGKISLFNMMTFKTMATFMPPPPAATFLAFHPQDNNIIAIGMDDSTIQIYNVRVDEVKSKLKGHSKRITGLAFSNVLNVLVSSGADAQLCVWNTDGWEKQRSKVLPLPQGRPNSAPSDTRVQFHQDQAHFLVVHETQLAIYETTKLECMKQWAVRESLAPITHATFSCDSQLVYASFMDATVCVFSSANLRLRCRVNPSAYLPASLSNSNVHPLVIAAHPQEPNMFAVGLSDGGVHIFEPLESEGKWGVAPPAENGSASGAPTAPSVGASASDQPQR.

The LisH domain occupies 4-36 (LSRELVFLILQFLDEEKFKETVHKLEQESGFFF). One can recognise a CTLH domain in the interval 34–92 (FFFNMKYFEDEVHNGNWDEVEKYLSGFTKVDDNRYSMKIFFEIRKQKYLEALDKHDRPK). Ser-214 carries the post-translational modification Phosphoserine. Positions 286 to 305 (TPPTNASLDYPSADSEHVSK) are disordered. WD repeat units follow at residues 353–393 (SQGS…RLVQ), 415–454 (EPVV…DMRQ), 460–501 (AHVG…KRHT), 504–545 (GHEA…SRVD), 548–591 (APGR…VKRT), 595–634 (FHKR…LLTA), 639–678 (GGLQ…RLLH), 710–756 (DRSA…EPSQ), 766–805 (LRVA…RNAT), 833–871 (NPEE…TMAT), 874–914 (PPPP…VKSK), 917–956 (GHSK…KQRS), 967–1005 (NSAP…CMKQ), 1010–1049 (ESLA…LRCR), and 1060–1102 (LSNS…GKWG). The disordered stretch occupies residues 1100 to 1131 (KWGVAPPAENGSASGAPTAPSVGASASDQPQR).

In terms of assembly, tetramer. Homodimer. Interacts (via the LisH domain) with WUS (via the C-terminal domain). Interacts with NINJA/AFPH2. Interacts with IAA1; IAA2; IAA3; IAA4; IAA6; IAA8; IAA9; IAA11; IAA13; IAA14; IAA17; IAA18; IAA26; IAA27 and IAA28. Interacts (via the LisH domain) with IAA12/BDL (via domain I). Can form a complex with IAA12 and ARF5. Interacts with AP2 (via EAR motif) and HDA19. Interacts with TIFY5A/JAZ8 (via EAR motif). Interacts with SPEAR3/TIE1. Interacts with SPL (via EAR motif). Interacts with ZAT2 and ZAT3 (via the EAR motif). Interacts with JAZ13 (via EAR motif). Interacts with GIR1 and GIR2. In terms of tissue distribution, expressed in embryo and in extraembryonic tissues. Expressed in inflorescences, flowers, floral meristems, developing anthers and ovules. Detected in the vascular tissues, shoot apical meristem, cotyledons and young leaves. Expressed ubiquitously in the pistils, stamens and pollens.

The protein localises to the nucleus. Its function is as follows. Transcriptional corepressor. May repress the expression of root-promoting genes in the top half of the embryo to allow proper differentiation of the shoot pole during the transition stage of embryogenesis. Regulates the expression of PLT1 and PLT2. Negative regulator of jasmonate responses. Negative regulator of auxin responses. Negative regulator of multiple floral organ identity genes. Required for ovule development. The protein is Protein TOPLESS (TPL) of Arabidopsis thaliana (Mouse-ear cress).